The sequence spans 1366 residues: DNA-directed RNA polymerase subunit beta (1366 aa).

It belongs to the RNA polymerase beta chain family. As to quaternary structure, the RNAP catalytic core consists of 2 alpha, 1 beta, 1 beta' and 1 omega subunit. When a sigma factor is associated with the core the holoenzyme is formed, which can initiate transcription.

The catalysed reaction is RNA(n) + a ribonucleoside 5'-triphosphate = RNA(n+1) + diphosphate. In terms of biological role, DNA-dependent RNA polymerase catalyzes the transcription of DNA into RNA using the four ribonucleoside triphosphates as substrates. This is DNA-directed RNA polymerase subunit beta from Polynucleobacter necessarius subsp. necessarius (strain STIR1).